Here is a 301-residue protein sequence, read N- to C-terminus: Dihydroorotate dehydrogenase B (NAD(+)), catalytic subunit (301 aa).

FMN contacts are provided by residues Ser21 and 45-46; that span reads KS. Substrate is bound by residues Lys45, 69–73, and Asn125; that span reads NAVGL. Residue Asn125 participates in FMN binding. Cys128 (nucleophile) is an active-site residue. FMN contacts are provided by Lys163 and Ile187. A substrate-binding site is contributed by 188-189; the sequence is NT. FMN-binding positions include Gly213, 239–240, and 261–262; these read GG and GT.

This sequence belongs to the dihydroorotate dehydrogenase family. Type 1 subfamily. In terms of assembly, heterotetramer of 2 PyrK and 2 PyrD type B subunits. FMN serves as cofactor.

It localises to the cytoplasm. The catalysed reaction is (S)-dihydroorotate + NAD(+) = orotate + NADH + H(+). It participates in pyrimidine metabolism; UMP biosynthesis via de novo pathway; orotate from (S)-dihydroorotate (NAD(+) route): step 1/1. Functionally, catalyzes the conversion of dihydroorotate to orotate with NAD(+) as electron acceptor. This Thermoplasma volcanium (strain ATCC 51530 / DSM 4299 / JCM 9571 / NBRC 15438 / GSS1) protein is Dihydroorotate dehydrogenase B (NAD(+)), catalytic subunit (pyrD).